The following is a 427-amino-acid chain: MLSKSEAAYKEALRYIPGGVDSPVRAFKSVGGVPPFIDRGEGAFLYDIDGNRYIDYVQSWGPLIFGHADKETLEAVCEQAQKGLSFGTPTLLETELAREIVELFDNIDKIRFVSSGTEAVMSAIRLARGYTGRDDIVKFEGCYHGHSDSLLVSAGSGAATFGNPSSPGVPADFTKHTLLARYNDIESVKRCFQASDNIACVIIEPIAGNMGLVPAEEEFLQDLRKLCDEHGALLIFDEVMSGFRASLKGAQGFTSVVPDMVTFGKVIGGGMPVGAFGARAEIMAHLSPEGPVYQAGTLSGNPVAMVAGLSVIRRLKNDPSIYEVLEARAKGLVGGFKKIADSFGVPLQVDVRGSMFGFFFNEKPVKNFDDAKQSDLEFFAKFHQEMIKRGIYFACSQFEAGFICTPLDEKLIDETLEKIEEGLKKIV.

The residue at position 265 (Lys-265) is an N6-(pyridoxal phosphate)lysine.

The protein belongs to the class-III pyridoxal-phosphate-dependent aminotransferase family. HemL subfamily. As to quaternary structure, homodimer. It depends on pyridoxal 5'-phosphate as a cofactor.

The protein localises to the cytoplasm. The catalysed reaction is (S)-4-amino-5-oxopentanoate = 5-aminolevulinate. It participates in porphyrin-containing compound metabolism; protoporphyrin-IX biosynthesis; 5-aminolevulinate from L-glutamyl-tRNA(Glu): step 2/2. This Nitratiruptor sp. (strain SB155-2) protein is Glutamate-1-semialdehyde 2,1-aminomutase.